Reading from the N-terminus, the 508-residue chain is Hydroxymethylglutaryl-CoA synthase, mitochondrial (508 aa).

Residues 1–37 (MQRLLTPVKRILQLTRAVQETSLTPARLLPVAHQRFS) constitute a mitochondrion transit peptide. At Lys-52 the chain carries N6-succinyllysine. (3S)-3-hydroxy-3-methylglutaryl-CoA is bound by residues Glu-80 and Ala-81. At Lys-83 the chain carries N6-acetyllysine; alternate. Lys-83 carries the post-translational modification N6-succinyllysine; alternate. Glu-132 (proton donor/acceptor) is an active-site residue. The (3S)-3-hydroxy-3-methylglutaryl-CoA site is built by Cys-166, Asn-204, and Thr-208. Catalysis depends on Cys-166, which acts as the Acyl-thioester intermediate. Position 221 is an N6-succinyllysine (Lys-221). The residue at position 243 (Lys-243) is an N6-acetyllysine. N6-acetyllysine; alternate is present on Lys-256. Lys-256 carries the post-translational modification N6-succinyllysine; alternate. The (3S)-3-hydroxy-3-methylglutaryl-CoA site is built by Ser-258 and His-301. His-301 serves as the catalytic Proton donor/acceptor. An N6-acetyllysine modification is found at Lys-306. Lys-310 provides a ligand contact to (3S)-3-hydroxy-3-methylglutaryl-CoA. Lys-310 carries the post-translational modification N6-acetyllysine; alternate. Lys-310 is subject to N6-succinyllysine; alternate. The residue at position 333 (Lys-333) is an N6-succinyllysine. Residues Lys-342, Lys-350, Lys-354, and Lys-358 each carry the N6-acetyllysine; alternate modification. N6-succinyllysine; alternate is present on residues Lys-342, Lys-350, Lys-354, and Lys-358. (3S)-3-hydroxy-3-methylglutaryl-CoA is bound by residues Asn-380 and Ser-414. Residue Ser-433 is modified to Phosphoserine. N6-acetyllysine is present on Lys-437. Residue Ser-440 is modified to Phosphoserine. At Lys-447 the chain carries N6-acetyllysine; alternate. N6-succinyllysine; alternate is present on Lys-447. A Phosphoserine modification is found at Ser-456. Lys-473 bears the N6-acetyllysine; alternate mark. Lys-473 carries the N6-succinyllysine; alternate modification. Ser-477 is subject to Phosphoserine.

It belongs to the thiolase-like superfamily. HMG-CoA synthase family. In terms of assembly, homodimer. In terms of processing, succinylated. Desuccinylated by SIRT5. Succinylation, at least at Lys-83 and Lys-310, inhibits the enzymatic activity. Expression in liver is 200-fold higher than in any other tissue. Low expression in colon, kidney, testis, and pancreas. Very low expression in heart and skeletal muscle. Not detected in brain. In terms of tissue distribution, highest expression detected in heart and skeletal muscle.

It localises to the mitochondrion. It carries out the reaction acetoacetyl-CoA + acetyl-CoA + H2O = (3S)-3-hydroxy-3-methylglutaryl-CoA + CoA + H(+). It functions in the pathway metabolic intermediate biosynthesis; (R)-mevalonate biosynthesis; (R)-mevalonate from acetyl-CoA: step 2/3. Its function is as follows. Catalyzes the first irreversible step in ketogenesis, condensing acetyl-CoA to acetoacetyl-CoA to form HMG-CoA, which is converted by HMG-CoA reductase (HMGCR) into mevalonate. This chain is Hydroxymethylglutaryl-CoA synthase, mitochondrial (HMGCS2), found in Homo sapiens (Human).